An 879-amino-acid polypeptide reads, in one-letter code: Metabotropic glutamate receptor 3 (879 aa).

The N-terminal stretch at 1–22 (MKMLTRLQVLTLALFSKGFLLS) is a signal peptide. Over 23–576 (LGDHNFLRRE…EDYIRWEDAW (554 aa)) the chain is Extracellular. An intrachain disulfide couples Cys-57 to Cys-99. L-glutamate-binding positions include Ser-151 and 172 to 174 (AST). A glycan (N-linked (GlcNAc...) asparagine) is linked at Asn-209. Tyr-222 contacts L-glutamate. Cystine bridges form between Cys-240/Cys-527, Cys-361/Cys-373, Cys-412/Cys-419, Cys-509/Cys-528, Cys-513/Cys-531, Cys-534/Cys-546, and Cys-549/Cys-562. N-linked (GlcNAc...) asparagine glycosylation occurs at Asn-292. Asp-301 is a binding site for L-glutamate. Position 389 (Lys-389) interacts with L-glutamate. Asn-414 and Asn-439 each carry an N-linked (GlcNAc...) asparagine glycan. Residues 577–599 (AIGPVTIACLGFMCTCMVVTVFI) traverse the membrane as a helical segment. Over 600 to 613 (KHNNTPLVKASGRE) the chain is Cytoplasmic. Residues 614-634 (LCYILLFGVGLSYCMTFFFIA) traverse the membrane as a helical segment. Residues 635 to 645 (KPSPVICALRR) lie on the Extracellular side of the membrane. The helical transmembrane segment at 646–664 (LGLGSSFAICYSALLTKTN) threads the bilayer. Over 665–688 (CIARIFDGVKNGAQRPKFISPSSQ) the chain is Cytoplasmic. Residues 689-709 (VFICLGLILVQIVMVSVWLIL) traverse the membrane as a helical segment. Over 710–734 (EAPGTRRYTLAEKRETVILKCNVKD) the chain is Extracellular. Residues 735–756 (SSMLISLTYDVILVILCTVYAF) traverse the membrane as a helical segment. Residues 757–769 (KTRKCPENFNEAK) are Cytoplasmic-facing. Residues 770–792 (FIGFTMYTTCIIWLAFLPIFYVT) traverse the membrane as a helical segment. Residues 793-802 (SSDYRVQTTT) are Extracellular-facing. Residues 803–828 (MCISVSLSGFVVLGCLFAPKVHIILF) traverse the membrane as a helical segment. Topologically, residues 829-879 (QPQKNVVTHRLHLNRFSVSGTGTTYSQSSASTYVPTVCNGREVLDSTTSSL) are cytoplasmic.

It belongs to the G-protein coupled receptor 3 family. As to quaternary structure, interacts with TAMALIN. Detected in brain cortex, thalamus, subthalamic nucleus, substantia nigra, hypothalamus, hippocampus, corpus callosum, caudate nucleus and amygdala.

It is found in the cell membrane. Its function is as follows. G-protein coupled receptor for glutamate. Ligand binding causes a conformation change that triggers signaling via guanine nucleotide-binding proteins (G proteins) and modulates the activity of down-stream effectors. Signaling inhibits adenylate cyclase activity. This is Metabotropic glutamate receptor 3 (GRM3) from Homo sapiens (Human).